A 418-amino-acid polypeptide reads, in one-letter code: Histidine--tRNA ligase (418 aa).

Belongs to the class-II aminoacyl-tRNA synthetase family. In terms of assembly, homodimer.

It is found in the cytoplasm. The enzyme catalyses tRNA(His) + L-histidine + ATP = L-histidyl-tRNA(His) + AMP + diphosphate + H(+). This chain is Histidine--tRNA ligase, found in Thermoanaerobacter sp. (strain X514).